Here is a 60-residue protein sequence, read N- to C-terminus: Homeobox protein CHOX-CAD2 (60 aa).

The segment at residues 1-60 is a DNA-binding region (homeobox); that stretch reads KEKYRVVYTDHQRLELEKEFHCNRYITIRRKSELAVNLGLSERQVKSWFQNRRAKERKII.

The protein belongs to the Caudal homeobox family.

Its subcellular location is the nucleus. The chain is Homeobox protein CHOX-CAD2 (CHOX-CAD2) from Gallus gallus (Chicken).